The primary structure comprises 387 residues: Sulfate adenylyltransferase (387 aa).

Belongs to the sulfate adenylyltransferase family.

It carries out the reaction sulfate + ATP + H(+) = adenosine 5'-phosphosulfate + diphosphate. Its pathway is sulfur metabolism; hydrogen sulfide biosynthesis; sulfite from sulfate: step 1/3. This Deinococcus radiodurans (strain ATCC 13939 / DSM 20539 / JCM 16871 / CCUG 27074 / LMG 4051 / NBRC 15346 / NCIMB 9279 / VKM B-1422 / R1) protein is Sulfate adenylyltransferase (sat).